Here is a 218-residue protein sequence, read N- to C-terminus: Pyridoxine/pyridoxamine 5'-phosphate oxidase (218 aa).

Substrate is bound by residues Arg-12–Tyr-15 and Arg-70. Residues Arg-65–Arg-70, Tyr-80–Thr-81, Lys-87, and Gln-109 each bind FMN. Substrate-binding residues include Tyr-127, Arg-131, and Ser-135. FMN contacts are provided by residues Gln-145–Ser-146 and Trp-191. Arg-197 to His-199 provides a ligand contact to substrate. Arg-201 provides a ligand contact to FMN.

This sequence belongs to the pyridoxamine 5'-phosphate oxidase family. As to quaternary structure, homodimer. It depends on FMN as a cofactor.

The enzyme catalyses pyridoxamine 5'-phosphate + O2 + H2O = pyridoxal 5'-phosphate + H2O2 + NH4(+). It carries out the reaction pyridoxine 5'-phosphate + O2 = pyridoxal 5'-phosphate + H2O2. It participates in cofactor metabolism; pyridoxal 5'-phosphate salvage; pyridoxal 5'-phosphate from pyridoxamine 5'-phosphate: step 1/1. The protein operates within cofactor metabolism; pyridoxal 5'-phosphate salvage; pyridoxal 5'-phosphate from pyridoxine 5'-phosphate: step 1/1. In terms of biological role, catalyzes the oxidation of either pyridoxine 5'-phosphate (PNP) or pyridoxamine 5'-phosphate (PMP) into pyridoxal 5'-phosphate (PLP). This Acinetobacter baumannii (strain SDF) protein is Pyridoxine/pyridoxamine 5'-phosphate oxidase.